The chain runs to 251 residues: Hydroxyacylglutathione hydrolase (251 aa).

Zn(2+)-binding residues include H53, H55, D57, H58, H110, D127, and H165.

The protein belongs to the metallo-beta-lactamase superfamily. Glyoxalase II family. In terms of assembly, monomer. Zn(2+) is required as a cofactor.

The enzyme catalyses an S-(2-hydroxyacyl)glutathione + H2O = a 2-hydroxy carboxylate + glutathione + H(+). The protein operates within secondary metabolite metabolism; methylglyoxal degradation; (R)-lactate from methylglyoxal: step 2/2. In terms of biological role, thiolesterase that catalyzes the hydrolysis of S-D-lactoyl-glutathione to form glutathione and D-lactic acid. The chain is Hydroxyacylglutathione hydrolase from Escherichia coli (strain UTI89 / UPEC).